The primary structure comprises 656 residues: Heparan-alpha-glucosaminide N-acetyltransferase (656 aa).

The interval 1 to 31 is disordered; the sequence is MTGGSSSRRRRAEERSSAAGTERNSRREAVG. Over 1-185 the chain is Lumenal, vesicle; sequence MTGGSSSRRR…IIVNENPVDS (185 aa). N-linked (GlcNAc...) asparagine glycosylation is found at Asn137 and Asn157. An intrachain disulfide couples Cys146 to Cys455. A helical transmembrane segment spans residues 186–206; that stretch reads NLPVSIAFLVGLALIVAVSLL. Over 207–268 the chain is Cytoplasmic; the sequence is RLLLSLDDVN…NRLRCVDTFR (62 aa). Residues 234–253 form a disordered region; the sequence is SELGSPSRADPLSADYQPET. 2 positions are modified to phosphoserine: Ser238 and Ser240. Position 249 is a phosphotyrosine (Tyr249). The chain crosses the membrane as a helical span at residues 269 to 289; the sequence is GLALVLMVFVNYGGGKYWYFK. His290 is an active-site residue. Residues 290–295 are Lumenal, vesicle-facing; sequence HSSWNG. Residues 296–316 form a helical membrane-spanning segment; the sequence is LTVADLVFPWFVFIMGTSIFL. Residues 317–338 lie on the Cytoplasmic side of the membrane; the sequence is SMTSILQRGCSKLKLLGKIVWR. The helical transmembrane segment at 339-359 threads the bilayer; it reads SFLLICIGVIIVNPNYCLGPL. Residues 360–367 are Lumenal, vesicle-facing; the sequence is SWDKVRIP. Residues 368-388 traverse the membrane as a helical segment; it reads GVLQRLGVTYFVVAVLEFFFW. Over 389 to 413 the chain is Cytoplasmic; it reads KPVPDSCTLESSCFSLRDITSSWPQ. Residues 414 to 434 form a helical membrane-spanning segment; it reads WLTILTLESIWLALTFFLPVP. The Lumenal, vesicle segment spans residues 435-493; it reads GCPTGYLGPGGIGDLGKYPHCTGGAAGYIDRLLLGDNHLYQHPSSTVLYHTEVAYDPEG. Residues 494–514 form a helical membrane-spanning segment; that stretch reads VLGTINSIVMAFLGVQAGKIL. Residues 515-522 lie on the Cytoplasmic side of the membrane; it reads VYYKDQTK. The chain crosses the membrane as a helical span at residues 523–543; it reads AILTRFAAWCCILGLISIVLT. The Lumenal, vesicle segment spans residues 544–557; the sequence is KVSANEGFIPINKN. A helical transmembrane segment spans residues 558 to 578; that stretch reads LWSISYVTTLSCFAFFILLIL. Topologically, residues 579–585 are cytoplasmic; that stretch reads YPVVDVK. A helical membrane pass occupies residues 586–606; that stretch reads GLWTGTPFFYPGMNSILVYVG. The Lumenal, vesicle portion of the chain corresponds to 607 to 627; sequence HEVLENYFPFQWKLADEQSHK. Residues 628-648 form a helical membrane-spanning segment; the sequence is EHLIQNIVATALWVLIAYVLY. Positions 641–656 are lysosomal targeting region; sequence VLIAYVLYKKKLFWKI. Residues 649 to 656 are Cytoplasmic-facing; the sequence is KKKLFWKI.

In terms of assembly, homooligomer. Homooligomerization is necessary for enzyme activity. Undergoes intralysosomal proteolytic cleavage; occurs within the end of the first and/or the beginning of the second luminal domain and is essential for the activation of the enzyme. In terms of processing, glycosylated. As to expression, expressed in the retina.

The protein localises to the lysosome membrane. It carries out the reaction alpha-D-glucosaminyl-[heparan sulfate](n) + acetyl-CoA = N-acetyl-alpha-D-glucosaminyl-[heparan sulfate](n) + CoA + H(+). Lysosomal acetyltransferase that acetylates the non-reducing terminal alpha-glucosamine residue of intralysosomal heparin or heparan sulfate, converting it into a substrate for luminal alpha-N-acetyl glucosaminidase. In Mus musculus (Mouse), this protein is Heparan-alpha-glucosaminide N-acetyltransferase (Hgsnat).